The primary structure comprises 66 residues: Large ribosomal subunit protein bL35 (66 aa).

Residues 1–16 (MPKQKTHRASAKRFKR) are compositionally biased toward basic residues. A disordered region spans residues 1-21 (MPKQKTHRASAKRFKRTGSGG).

This sequence belongs to the bacterial ribosomal protein bL35 family.

In Streptococcus agalactiae serotype Ia (strain ATCC 27591 / A909 / CDC SS700), this protein is Large ribosomal subunit protein bL35.